A 356-amino-acid polypeptide reads, in one-letter code: A-type ATP synthase subunit C (356 aa).

The protein belongs to the V-ATPase V0D/AC39 subunit family. Has multiple subunits with at least A(3), B(3), C, D, E, F, H, I and proteolipid K(x).

It localises to the cell membrane. Functionally, component of the A-type ATP synthase that produces ATP from ADP in the presence of a proton gradient across the membrane. The protein is A-type ATP synthase subunit C of Thermoplasma volcanium (strain ATCC 51530 / DSM 4299 / JCM 9571 / NBRC 15438 / GSS1).